The sequence spans 154 residues: Deoxyuridine 5'-triphosphate nucleotidohydrolase (154 aa).

Substrate-binding positions include 72–74 (RSG), Asn85, 89–91 (LID), and Met99.

It belongs to the dUTPase family. Requires Mg(2+) as cofactor.

It catalyses the reaction dUTP + H2O = dUMP + diphosphate + H(+). Its pathway is pyrimidine metabolism; dUMP biosynthesis; dUMP from dCTP (dUTP route): step 2/2. In terms of biological role, this enzyme is involved in nucleotide metabolism: it produces dUMP, the immediate precursor of thymidine nucleotides and it decreases the intracellular concentration of dUTP so that uracil cannot be incorporated into DNA. This Psychrobacter cryohalolentis (strain ATCC BAA-1226 / DSM 17306 / VKM B-2378 / K5) protein is Deoxyuridine 5'-triphosphate nucleotidohydrolase.